The sequence spans 404 residues: Glutamate-pyruvate aminotransferase AlaA (404 aa).

Residues G41 and N179 each coordinate L-alanine. K240 is modified (N6-(pyridoxal phosphate)lysine). Residue R378 participates in L-alanine binding.

The protein belongs to the class-I pyridoxal-phosphate-dependent aminotransferase family. As to quaternary structure, homodimer. Requires pyridoxal 5'-phosphate as cofactor.

The catalysed reaction is L-alanine + 2-oxoglutarate = pyruvate + L-glutamate. The protein operates within amino-acid biosynthesis; L-alanine biosynthesis. Its function is as follows. Involved in the biosynthesis of alanine. Catalyzes the transamination of pyruvate by glutamate, leading to the formation of L-alanine and 2-oxoglutarate. Is also able to catalyze the reverse reaction. The protein is Glutamate-pyruvate aminotransferase AlaA (alaA) of Haemophilus influenzae (strain ATCC 51907 / DSM 11121 / KW20 / Rd).